The primary structure comprises 452 residues: tRNA modification GTPase MnmE (452 aa).

3 residues coordinate (6S)-5-formyl-5,6,7,8-tetrahydrofolate: R28, E85, and K124. The TrmE-type G domain occupies 220-378; sequence GMNVVLVGRP…LRTELLRAAG (159 aa). N230 serves as a coordination point for K(+). GTP is bound by residues 230–235, 249–255, 274–277, and 359–361; these read NVGKSS, TDVAGTT, DTAG, and SAR. A Mg(2+)-binding site is contributed by S234. 3 residues coordinate K(+): T249, V251, and T254. Residue T255 participates in Mg(2+) binding. K452 contacts (6S)-5-formyl-5,6,7,8-tetrahydrofolate.

This sequence belongs to the TRAFAC class TrmE-Era-EngA-EngB-Septin-like GTPase superfamily. TrmE GTPase family. As to quaternary structure, homodimer. Heterotetramer of two MnmE and two MnmG subunits. Requires K(+) as cofactor.

The protein localises to the cytoplasm. Functionally, exhibits a very high intrinsic GTPase hydrolysis rate. Involved in the addition of a carboxymethylaminomethyl (cmnm) group at the wobble position (U34) of certain tRNAs, forming tRNA-cmnm(5)s(2)U34. The polypeptide is tRNA modification GTPase MnmE (Azoarcus sp. (strain BH72)).